The sequence spans 297 residues: Transcription factor LRL3 (297 aa).

Positions 59-109 (PDQFHHPQESGGPTMGSQEGLQPQGTVSTTSAPVVRQKPRVRARRGQATDP) are disordered. Residues 73–90 (MGSQEGLQPQGTVSTTSA) are compositionally biased toward polar residues. A basic motif; degenerate region spans residues 105 to 118 (QATDPHSIAERLRR). In terms of domain architecture, bHLH spans 105-154 (QATDPHSIAERLRRERIAERMKSLQELVPNTNKTDKASMLDEIIEYVRFL). Residues 119-154 (ERIAERMKSLQELVPNTNKTDKASMLDEIIEYVRFL) form a helix-loop-helix motif region.

In terms of assembly, homodimer. As to expression, expressed in trichomes of the root maturation zone. Detected constitutively in flowers.

The protein localises to the nucleus. Transcription factor that regulates the development of root hairs. Does not seem to be involved in the regulation of sperm cell development. The polypeptide is Transcription factor LRL3 (Arabidopsis thaliana (Mouse-ear cress)).